Consider the following 727-residue polypeptide: 1,4-alpha-glucan branching enzyme GlgB (727 aa).

Asp-405 acts as the Nucleophile in catalysis. Glu-458 (proton donor) is an active-site residue.

Belongs to the glycosyl hydrolase 13 family. GlgB subfamily. As to quaternary structure, monomer.

The enzyme catalyses Transfers a segment of a (1-&gt;4)-alpha-D-glucan chain to a primary hydroxy group in a similar glucan chain.. It participates in glycan biosynthesis; glycogen biosynthesis. Its function is as follows. Catalyzes the formation of the alpha-1,6-glucosidic linkages in glycogen by scission of a 1,4-alpha-linked oligosaccharide from growing alpha-1,4-glucan chains and the subsequent attachment of the oligosaccharide to the alpha-1,6 position. The protein is 1,4-alpha-glucan branching enzyme GlgB of Yersinia pestis bv. Antiqua (strain Antiqua).